The sequence spans 321 residues: Prephenate dehydratase (321 aa).

The 187-residue stretch at Arg-3–Arg-189 folds into the Prephenate dehydratase domain. The ACT domain occupies Ser-203–Pro-280.

Homodimer.

The enzyme catalyses prephenate + H(+) = 3-phenylpyruvate + CO2 + H2O. It functions in the pathway amino-acid biosynthesis; L-phenylalanine biosynthesis; phenylpyruvate from prephenate: step 1/1. The polypeptide is Prephenate dehydratase (pheA) (Mycobacterium bovis (strain ATCC BAA-935 / AF2122/97)).